The chain runs to 253 residues: Pimeloyl-[acyl-carrier protein] methyl ester esterase (253 aa).

Residues tryptophan 18, 78–79 (SL), and 139–143 (FLALD) each bind substrate. Serine 78 (nucleophile) is an active-site residue. Catalysis depends on residues aspartate 203 and histidine 231. Residue histidine 231 participates in substrate binding.

Belongs to the AB hydrolase superfamily. Carboxylesterase BioH family. In terms of assembly, monomer.

It localises to the cytoplasm. It catalyses the reaction 6-carboxyhexanoyl-[ACP] methyl ester + H2O = 6-carboxyhexanoyl-[ACP] + methanol + H(+). It participates in cofactor biosynthesis; biotin biosynthesis. In terms of biological role, the physiological role of BioH is to remove the methyl group introduced by BioC when the pimeloyl moiety is complete. It allows to synthesize pimeloyl-ACP via the fatty acid synthetic pathway through the hydrolysis of the ester bonds of pimeloyl-ACP esters. The protein is Pimeloyl-[acyl-carrier protein] methyl ester esterase of Xanthomonas campestris pv. campestris (strain 8004).